The following is a 124-amino-acid chain: Putative membrane protein insertion efficiency factor (124 aa).

A compositionally biased stretch (basic and acidic residues) spans 1-12 (MCPQPHADHAIT). The disordered stretch occupies residues 1-26 (MCPQPHADHAITRGDTGAAGGRNWSG).

This sequence belongs to the UPF0161 family.

It localises to the cell inner membrane. In terms of biological role, could be involved in insertion of integral membrane proteins into the membrane. The chain is Putative membrane protein insertion efficiency factor from Rhizobium meliloti (strain 1021) (Ensifer meliloti).